Consider the following 248-residue polypeptide: Probable transcriptional regulatory protein Noc_0137 (248 aa).

Belongs to the TACO1 family.

It is found in the cytoplasm. In Nitrosococcus oceani (strain ATCC 19707 / BCRC 17464 / JCM 30415 / NCIMB 11848 / C-107), this protein is Probable transcriptional regulatory protein Noc_0137.